The primary structure comprises 423 residues: Transmembrane protein 130 (423 aa).

The signal sequence occupies residues 1-24 (MAQAVWSRLGRILWLSCLLPWAPA). Topologically, residues 25–339 (GVAAGLYELN…IQVWPSRIQP (315 aa)) are extracellular. Asparagine 34, asparagine 197, and asparagine 300 each carry an N-linked (GlcNAc...) asparagine glycan. The 87-residue stretch at 147 to 233 (WPSSYLTKTI…AVMQKTGDFS (87 aa)) folds into the PKD domain. The helical transmembrane segment at 340-360 (AVFAFPCATLITVMLAFIMYM) threads the bilayer. At 361–423 (TLRNATQQKD…LYKSVKTYTV (63 aa)) the chain is on the cytoplasmic side.

It localises to the golgi apparatus membrane. The sequence is that of Transmembrane protein 130 (TMEM130) from Pongo abelii (Sumatran orangutan).